The sequence spans 702 residues: Ribosomal RNA large subunit methyltransferase K/L (702 aa).

A THUMP domain is found at 43–154 (LVYQSLMWSR…KETASIALDL (112 aa)).

Belongs to the methyltransferase superfamily. RlmKL family.

Its subcellular location is the cytoplasm. The enzyme catalyses guanosine(2445) in 23S rRNA + S-adenosyl-L-methionine = N(2)-methylguanosine(2445) in 23S rRNA + S-adenosyl-L-homocysteine + H(+). The catalysed reaction is guanosine(2069) in 23S rRNA + S-adenosyl-L-methionine = N(2)-methylguanosine(2069) in 23S rRNA + S-adenosyl-L-homocysteine + H(+). Its function is as follows. Specifically methylates the guanine in position 2445 (m2G2445) and the guanine in position 2069 (m7G2069) of 23S rRNA. This Escherichia coli O6:H1 (strain CFT073 / ATCC 700928 / UPEC) protein is Ribosomal RNA large subunit methyltransferase K/L.